The primary structure comprises 479 residues: Calcium/calmodulin-dependent protein kinase type II delta chain (479 aa).

Residues 14–272 form the Protein kinase domain; it reads YQLFEELGKG…ASEALKHPWI (259 aa). ATP contacts are provided by residues 20 to 28 and lysine 43; that span reads LGKGAFSVV. The active-site Proton acceptor is aspartate 136. Residue threonine 287 is modified to Phosphothreonine. Phosphoserine is present on residues serine 315 and serine 319. Residue threonine 337 is modified to Phosphothreonine.

This sequence belongs to the protein kinase superfamily. CAMK Ser/Thr protein kinase family. CaMK subfamily. In terms of assembly, CAMK2 is composed of four different chains: alpha, beta, gamma, and delta. The different isoforms assemble into homo- or heteromultimeric holoenzymes composed of 8 to 12 subunits.

The enzyme catalyses L-seryl-[protein] + ATP = O-phospho-L-seryl-[protein] + ADP + H(+). The catalysed reaction is L-threonyl-[protein] + ATP = O-phospho-L-threonyl-[protein] + ADP + H(+). Its activity is regulated as follows. Autophosphorylation of CAMK2 plays an important role in the regulation of the kinase activity. CaM-kinase II (CAMK2) is a prominent kinase in the central nervous system. This is Calcium/calmodulin-dependent protein kinase type II delta chain (CAMK2D) from Gallus gallus (Chicken).